We begin with the raw amino-acid sequence, 416 residues long: Peptide chain release factor subunit 1 (416 aa).

The protein belongs to the eukaryotic release factor 1 family. As to quaternary structure, heterodimer of two subunits, one of which binds GTP.

The protein resides in the cytoplasm. Directs the termination of nascent peptide synthesis (translation) in response to the termination codons UAA, UAG and UGA. The chain is Peptide chain release factor subunit 1 from Halobacterium salinarum (strain ATCC 29341 / DSM 671 / R1).